We begin with the raw amino-acid sequence, 138 residues long: MVNDTISDMLTRIRNANLAKKTSVSLPKTKVHEKMCQILEQEGFIKTFSFSETNTNELIVDLKYQDFASFGNYGVGKPCITNLKRISKPGLRIYTNSREIPKVLGGMGILILSTSKGLMTDRQARKLCLGGEILCSVW.

This sequence belongs to the universal ribosomal protein uS8 family. In terms of assembly, part of the 30S ribosomal subunit.

The protein localises to the plastid. The protein resides in the chloroplast. In terms of biological role, one of the primary rRNA binding proteins, it binds directly to 16S rRNA central domain where it helps coordinate assembly of the platform of the 30S subunit. This is Small ribosomal subunit protein uS8c (rps8) from Chlorella vulgaris (Green alga).